A 385-amino-acid polypeptide reads, in one-letter code: MKFVDEATILAAAGDGGNGCVSFRREKYIPRGGPDGGDGGDGGDVWLLADENLNTLIDYRFEKNFRAERGQNGQSCDCTGKRGKDIIIKVPVGTRVLDSGTNEVMGDMTRHAQRLMVAKGGFHGLGNTRFKSSVNRAPRQKTGGTKGEIREIQLELMLLADVGMLGLPNAGKSTFIRAVSAAKPKVADYPFTTLVPSLGVVRMDNEQSFVVADIPGLIEGAADGAGLGIRFLKHLERCQVLLHLIDLAPVDESDPVENARIIVTELERYSENLASKPRWLVFNKADLLDPEEAASRANAIAKVLGWEEKYYLISAANRDGVKALCWDVMAFINAHPKEQAAPEAAPEKVEFMWDDYHRDQLQQEEAEETLDDDWDEDGVETIYQR.

The 159-residue stretch at 1–159 (MKFVDEATIL…REIQLELMLL (159 aa)) folds into the Obg domain. Residues 160–333 (ADVGMLGLPN…LCWDVMAFIN (174 aa)) form the OBG-type G domain. GTP is bound by residues 166–173 (GLPNAGKS), 191–195 (FTTLV), 213–216 (DIPG), 283–286 (NKAD), and 314–316 (SAA). Residues Ser-173 and Thr-193 each coordinate Mg(2+). Acidic residues predominate over residues 362 to 379 (QQEEAEETLDDDWDEDGV). Positions 362–385 (QQEEAEETLDDDWDEDGVETIYQR) are disordered.

It belongs to the TRAFAC class OBG-HflX-like GTPase superfamily. OBG GTPase family. In terms of assembly, monomer. Mg(2+) is required as a cofactor.

It localises to the cytoplasm. An essential GTPase which binds GTP, GDP and possibly (p)ppGpp with moderate affinity, with high nucleotide exchange rates and a fairly low GTP hydrolysis rate. Plays a role in control of the cell cycle, stress response, ribosome biogenesis and in those bacteria that undergo differentiation, in morphogenesis control. The protein is GTPase Obg of Sodalis glossinidius (strain morsitans).